The sequence spans 244 residues: Aspartate/glutamate leucyltransferase (244 aa).

This sequence belongs to the R-transferase family. Bpt subfamily.

The protein localises to the cytoplasm. The enzyme catalyses N-terminal L-glutamyl-[protein] + L-leucyl-tRNA(Leu) = N-terminal L-leucyl-L-glutamyl-[protein] + tRNA(Leu) + H(+). It catalyses the reaction N-terminal L-aspartyl-[protein] + L-leucyl-tRNA(Leu) = N-terminal L-leucyl-L-aspartyl-[protein] + tRNA(Leu) + H(+). In terms of biological role, functions in the N-end rule pathway of protein degradation where it conjugates Leu from its aminoacyl-tRNA to the N-termini of proteins containing an N-terminal aspartate or glutamate. This Bordetella bronchiseptica (strain ATCC BAA-588 / NCTC 13252 / RB50) (Alcaligenes bronchisepticus) protein is Aspartate/glutamate leucyltransferase.